We begin with the raw amino-acid sequence, 238 residues long: MLVIPAIDLIGGEVVRLEKGDFAKKTVYARDPAEKAAELVRDGATLIHVVDLDGAKAGWPVNLDAVRAICAVPGAEVELGGGLRSLPDIEKVLELGVRYVVLGTAAVERLDLVRQACARFPGRVRSGIDARNGEVKIAGWLEGTGLGAAEVARRVKEAGVGLVEYTDVGRDGMFTGVDADGAARLQAEAGVQVVASGGVASLDDVRACRAAGLAGVIVGKALYEGRIALADAVRTAAE.

Catalysis depends on aspartate 8, which acts as the Proton acceptor. The active-site Proton donor is aspartate 129.

This sequence belongs to the HisA/HisF family.

It is found in the cytoplasm. The catalysed reaction is 1-(5-phospho-beta-D-ribosyl)-5-[(5-phospho-beta-D-ribosylamino)methylideneamino]imidazole-4-carboxamide = 5-[(5-phospho-1-deoxy-D-ribulos-1-ylimino)methylamino]-1-(5-phospho-beta-D-ribosyl)imidazole-4-carboxamide. Its pathway is amino-acid biosynthesis; L-histidine biosynthesis; L-histidine from 5-phospho-alpha-D-ribose 1-diphosphate: step 4/9. This is 1-(5-phosphoribosyl)-5-[(5-phosphoribosylamino)methylideneamino] imidazole-4-carboxamide isomerase from Anaeromyxobacter dehalogenans (strain 2CP-C).